A 172-amino-acid polypeptide reads, in one-letter code: Protein-export protein SecB (172 aa).

Residues 153-172 (AQGQGGDSGIVMPDGSQARH) are disordered.

It belongs to the SecB family. As to quaternary structure, homotetramer, a dimer of dimers. One homotetramer interacts with 1 SecA dimer.

It is found in the cytoplasm. Its function is as follows. One of the proteins required for the normal export of preproteins out of the cell cytoplasm. It is a molecular chaperone that binds to a subset of precursor proteins, maintaining them in a translocation-competent state. It also specifically binds to its receptor SecA. The chain is Protein-export protein SecB from Cupriavidus metallidurans (strain ATCC 43123 / DSM 2839 / NBRC 102507 / CH34) (Ralstonia metallidurans).